The following is a 100-amino-acid chain: Small ribosomal subunit protein uS14c (100 aa).

It belongs to the universal ribosomal protein uS14 family. Part of the 30S ribosomal subunit.

The protein resides in the plastid. It is found in the chloroplast. In terms of biological role, binds 16S rRNA, required for the assembly of 30S particles. In Olimarabidopsis pumila (Dwarf rocket), this protein is Small ribosomal subunit protein uS14c.